Here is a 727-residue protein sequence, read N- to C-terminus: Centrosomal protein kizuna (727 aa).

Residues 1-20 are disordered; that stretch reads MTERSGRGGGTRGASALPSP. A coiled-coil region spans residues 77-124; it reads KNARIRNQEYLKQFERIQANITASLEKLQELKIEFETQIKKMQLLSKD. Disordered regions lie at residues 176-226, 271-456, and 564-727; these read DFTT…NKSD, EGKK…FTNL, and RLAV…PRTP. Over residues 198-223 the composition is skewed to polar residues; that stretch reads HQQTAQSSDVTGSRVVQTPGDTQCLN. The span at 286 to 324 shows a compositional bias: basic and acidic residues; that stretch reads LSPENRTTDLKCDSSRRSEGSEGEILTREHIEVEEERAR. S328 carries the phosphoserine modification. Residues 343–359 are compositionally biased toward basic and acidic residues; sequence PQEKPPARKASSDHLPC. The segment covering 380-390 has biased composition (low complexity); the sequence is LSSSSDLTVSV. Residue T387 is modified to Phosphothreonine; by PLK1. Residues 442-455 show a composition bias toward polar residues; the sequence is APSTPDSPNESFTN. Over residues 569–583 the composition is skewed to low complexity; sequence SSKSSCSLPSTPSDE. The segment covering 603-613 has biased composition (acidic residues); that stretch reads QEDESREESTE. Residues 631–642 are compositionally biased toward polar residues; the sequence is LKQSALQGSTHQ. 2 stretches are compositionally biased toward low complexity: residues 659-669 and 677-689; these read GLKTGSGTFKT and SEASFSSSEGSPL. 3 positions are modified to phosphoserine: S711, S714, and S716.

It belongs to the kizuna family. Interacts with AKAP9, CEP72, ODF2, PCNT and TUBGCP2. In terms of processing, phosphorylation at Thr-387 by PLK1 is not needed for centrosomal localization or pericentriolar material expansion but is indispensable for spindle-pole stabilization.

It is found in the cytoplasm. The protein resides in the cytoskeleton. It localises to the microtubule organizing center. The protein localises to the centrosome. Its subcellular location is the cilium basal body. Functionally, centrosomal protein required for establishing a robust mitotic centrosome architecture that can endure the forces that converge on the centrosomes during spindle formation. Required for stabilizing the expanded pericentriolar material around the centriole. This Bos taurus (Bovine) protein is Centrosomal protein kizuna (KIZ).